The chain runs to 319 residues: Protein-methionine-sulfoxide reductase catalytic subunit MsrP (319 aa).

The segment at residues 1–54 (MSSFKPSRFSTARLTGDAVTPKSIYLRRREFMIGLGAIAATGAASSAFADPLEA) is a signal peptide (tat-type signal). Mo-molybdopterin is bound by residues Asn75, 78-79 (YE), Cys133, Asn218, Arg223, and 234-236 (GIK).

The protein belongs to the MsrP family. As to quaternary structure, heterodimer of a catalytic subunit (MsrP) and a heme-binding subunit (MsrQ). Requires Mo-molybdopterin as cofactor. In terms of processing, predicted to be exported by the Tat system. The position of the signal peptide cleavage has not been experimentally proven.

It is found in the periplasm. The enzyme catalyses L-methionyl-[protein] + a quinone + H2O = L-methionyl-(S)-S-oxide-[protein] + a quinol. It carries out the reaction L-methionyl-[protein] + a quinone + H2O = L-methionyl-(R)-S-oxide-[protein] + a quinol. Functionally, part of the MsrPQ system that repairs oxidized periplasmic proteins containing methionine sulfoxide residues (Met-O), using respiratory chain electrons. Thus protects these proteins from oxidative-stress damage caused by reactive species of oxygen and chlorine generated by the host defense mechanisms. MsrPQ is essential for the maintenance of envelope integrity under bleach stress, rescuing a wide series of structurally unrelated periplasmic proteins from methionine oxidation. The catalytic subunit MsrP is non-stereospecific, being able to reduce both (R-) and (S-) diastereoisomers of methionine sulfoxide. The protein is Protein-methionine-sulfoxide reductase catalytic subunit MsrP of Brucella melitensis biotype 1 (strain ATCC 23456 / CCUG 17765 / NCTC 10094 / 16M).